We begin with the raw amino-acid sequence, 114 residues long: Nucleoid-associated protein PCC8801_2554 (114 aa).

It belongs to the YbaB/EbfC family. In terms of assembly, homodimer.

Its subcellular location is the cytoplasm. The protein resides in the nucleoid. Functionally, binds to DNA and alters its conformation. May be involved in regulation of gene expression, nucleoid organization and DNA protection. The chain is Nucleoid-associated protein PCC8801_2554 from Rippkaea orientalis (strain PCC 8801 / RF-1) (Cyanothece sp. (strain PCC 8801)).